The sequence spans 280 residues: Meiotic driver wtf35 (280 aa).

The span at 1 to 29 shows a compositional bias: basic and acidic residues; it reads MKNKDYPLRTSMDELSTKNDNEIDLEKGP. Disordered stretches follow at residues 1–49 and 64–100; these read MKNK…DLNN and NKSTTPPDYDENRLPITDEGNNPPNTHRENHSSGTTD. 4 helical membrane-spanning segments follow: residues 105 to 125, 142 to 162, 184 to 204, and 218 to 238; these read FLIKLLISFTSIILFNAPAVC, WTLIGFWCASSLIIFTFSWYF, IPMAFSEVFLFNILVGSPRVA, and SLADHIIFAILSILVFIVETV.

This sequence belongs to the WTF family. In terms of assembly, homomer. Forms protein aggregates. The two isoforms can interact with each other and with themselves. High sequence similarity is required for their interaction.

The protein localises to the spore membrane. It is found in the vacuole membrane. Its subcellular location is the ascus epiplasm. The protein resides in the cytoplasm. It localises to the endoplasmic reticulum membrane. In terms of biological role, promotes unequal transmission of alleles from the parental zygote to progeny spores by acting as poison/antidote system where the poison and antidote proteins are produced from the same locus; the poison component is trans-acting and targets all spores within an ascus whereas the antidote component is spore-specific, leading to poisoning of all progeny that do not inherit the allele. Localizes isoform 2 to the vacuole thereby facilitating its degradation. Functionally, forms toxic aggregates that disrupt spore maturation. The chain is Meiotic driver wtf35 from Schizosaccharomyces pombe (Fission yeast).